Here is a 261-residue protein sequence, read N- to C-terminus: Imidazole glycerol phosphate synthase subunit HisF (261 aa).

Catalysis depends on residues aspartate 12 and aspartate 131.

This sequence belongs to the HisA/HisF family. Heterodimer of HisH and HisF.

Its subcellular location is the cytoplasm. The enzyme catalyses 5-[(5-phospho-1-deoxy-D-ribulos-1-ylimino)methylamino]-1-(5-phospho-beta-D-ribosyl)imidazole-4-carboxamide + L-glutamine = D-erythro-1-(imidazol-4-yl)glycerol 3-phosphate + 5-amino-1-(5-phospho-beta-D-ribosyl)imidazole-4-carboxamide + L-glutamate + H(+). Its pathway is amino-acid biosynthesis; L-histidine biosynthesis; L-histidine from 5-phospho-alpha-D-ribose 1-diphosphate: step 5/9. Its function is as follows. IGPS catalyzes the conversion of PRFAR and glutamine to IGP, AICAR and glutamate. The HisF subunit catalyzes the cyclization activity that produces IGP and AICAR from PRFAR using the ammonia provided by the HisH subunit. This Brucella abortus (strain S19) protein is Imidazole glycerol phosphate synthase subunit HisF.